The primary structure comprises 34 residues: Potassium channel toxin alpha-KTx 6.3 (34 aa).

Disulfide bonds link cysteine 3/cysteine 24, cysteine 9/cysteine 29, cysteine 13/cysteine 31, and cysteine 19/cysteine 34. Cysteine 34 bears the Cysteine amide mark.

This sequence belongs to the short scorpion toxin superfamily. Potassium channel inhibitor family. Alpha-KTx 06 subfamily. In terms of processing, amidated. The amidated toxin shows 5-fold more affinity for Kv1.3/KCNA3 than the synthetic carboxylated form. As to expression, expressed by the venom gland.

The protein localises to the secreted. In terms of biological role, potently blocks voltage-gated potassium channels Kv1.1/KCNA1 (IC(50)=7-11 nM) and Kv1.3/KCNA3 (IC(50)=11-29 pM). Also mildly blocks intermediate (IK) conductance calcium-activated potassium channels (KCa3.1/KCNN4) and ERG1/Kv11.1/KCNH2. Shows ability to suppress proliferation of lymphocytes, which are known to be sensitive to Kv1.3/KCNA3 homotetrameric channel block. The polypeptide is Potassium channel toxin alpha-KTx 6.3 (Heterometrus spinifer (Asia giant forest scorpion)).